Reading from the N-terminus, the 248-residue chain is Probable transcriptional regulatory protein PSPTO_3980 (248 aa).

The protein belongs to the TACO1 family.

Its subcellular location is the cytoplasm. This chain is Probable transcriptional regulatory protein PSPTO_3980, found in Pseudomonas syringae pv. tomato (strain ATCC BAA-871 / DC3000).